The primary structure comprises 421 residues: Tryptophan synthase beta chain (421 aa).

K112 bears the N6-(pyridoxal phosphate)lysine mark.

Belongs to the TrpB family. Tetramer of two alpha and two beta chains. Pyridoxal 5'-phosphate serves as cofactor.

The enzyme catalyses (1S,2R)-1-C-(indol-3-yl)glycerol 3-phosphate + L-serine = D-glyceraldehyde 3-phosphate + L-tryptophan + H2O. Its pathway is amino-acid biosynthesis; L-tryptophan biosynthesis; L-tryptophan from chorismate: step 5/5. In terms of biological role, the beta subunit is responsible for the synthesis of L-tryptophan from indole and L-serine. This chain is Tryptophan synthase beta chain (trpB), found in Mycobacterium bovis (strain ATCC BAA-935 / AF2122/97).